The sequence spans 282 residues: NADPH-dependent 7-cyano-7-deazaguanine reductase (282 aa).

88 to 90 is a binding site for substrate; sequence IES. 90–91 contacts NADPH; sequence SK. Cysteine 190 (thioimide intermediate) is an active-site residue. Residue aspartate 197 is the Proton donor of the active site. 229–230 serves as a coordination point for substrate; sequence HE. NADPH is bound at residue 258–259; the sequence is RG.

The protein belongs to the GTP cyclohydrolase I family. QueF type 2 subfamily. In terms of assembly, homodimer.

It localises to the cytoplasm. The enzyme catalyses 7-aminomethyl-7-carbaguanine + 2 NADP(+) = 7-cyano-7-deazaguanine + 2 NADPH + 3 H(+). The protein operates within tRNA modification; tRNA-queuosine biosynthesis. Catalyzes the NADPH-dependent reduction of 7-cyano-7-deazaguanine (preQ0) to 7-aminomethyl-7-deazaguanine (preQ1). The polypeptide is NADPH-dependent 7-cyano-7-deazaguanine reductase (Escherichia coli (strain K12 / MC4100 / BW2952)).